A 604-amino-acid chain; its full sequence is Aspartate--tRNA(Asp/Asn) ligase (604 aa).

E168 serves as a coordination point for L-aspartate. The interval 192–195 (QLFK) is aspartate. R214 serves as a coordination point for L-aspartate. ATP contacts are provided by residues 214–216 (RDE) and Q223. An L-aspartate-binding site is contributed by H446. E480 contributes to the ATP binding site. An L-aspartate-binding site is contributed by R487. 532–535 (GWDR) contributes to the ATP binding site. A disordered region spans residues 575 to 604 (LEAGVDARPKPEARAQAGTAGPAAPVADPT). The span at 577 to 587 (AGVDARPKPEA) shows a compositional bias: basic and acidic residues. Residues 588 to 604 (RAQAGTAGPAAPVADPT) show a composition bias toward low complexity.

Belongs to the class-II aminoacyl-tRNA synthetase family. Type 1 subfamily. As to quaternary structure, homodimer.

Its subcellular location is the cytoplasm. It carries out the reaction tRNA(Asx) + L-aspartate + ATP = L-aspartyl-tRNA(Asx) + AMP + diphosphate. Functionally, aspartyl-tRNA synthetase with relaxed tRNA specificity since it is able to aspartylate not only its cognate tRNA(Asp) but also tRNA(Asn). Reaction proceeds in two steps: L-aspartate is first activated by ATP to form Asp-AMP and then transferred to the acceptor end of tRNA(Asp/Asn). In Salinispora arenicola (strain CNS-205), this protein is Aspartate--tRNA(Asp/Asn) ligase.